The chain runs to 340 residues: Beta-hexosaminidase (340 aa).

Residues Asp60, Arg68, Arg127, and 157 to 158 (KH) contribute to the substrate site. His170 (proton donor/acceptor) is an active-site residue. Residue Asp242 is the Nucleophile of the active site.

The protein belongs to the glycosyl hydrolase 3 family. NagZ subfamily.

The protein resides in the cytoplasm. The catalysed reaction is Hydrolysis of terminal non-reducing N-acetyl-D-hexosamine residues in N-acetyl-beta-D-hexosaminides.. The protein operates within cell wall biogenesis; peptidoglycan recycling. Its function is as follows. Plays a role in peptidoglycan recycling by cleaving the terminal beta-1,4-linked N-acetylglucosamine (GlcNAc) from peptide-linked peptidoglycan fragments, giving rise to free GlcNAc, anhydro-N-acetylmuramic acid and anhydro-N-acetylmuramic acid-linked peptides. The sequence is that of Beta-hexosaminidase from Glaesserella parasuis serovar 5 (strain SH0165) (Haemophilus parasuis).